The chain runs to 150 residues: Infection structure-specific protein 24 (150 aa).

In terms of biological role, involved in the development of infection structures. The germ tube elongates across the leaf surface of the infected plant until it recognizes a stomate. Physical stimuli provided by the stomate induce differentiation of the germ tube to form a series of infection structures involved in host colonization. The protein is Infection structure-specific protein 24 (INF24) of Uromyces appendiculatus (Rust fungus).